A 186-amino-acid chain; its full sequence is PR-toxin biosynthesis cluster protein 7 (186 aa).

Residues 24–43 (LGEVTTGGVTPRGTFIFCPI) traverse the membrane as a helical segment.

It localises to the membrane. It functions in the pathway sesquiterpene biosynthesis. Part of the gene cluster that mediates the biosynthesis of PR-toxin, a bicyclic sesquiterpene belonging to the eremophilane class and acting as a mycotoxin. The first step of the pathway is catalyzed by the aristolochene synthase which performs the cyclization of trans,trans-farnesyl diphosphate (FPP) to the bicyclic sesquiterpene aristolochene. Following the formation of aristolochene, the non-oxygenated aristolochene is converted to the trioxygenated intermediate eremofortin B, via 7-epi-neopetasone. This conversion appears to involve three enzymes, a hydroxysterol oxidase-like enzyme, the quinone-oxidase prx3 that forms the quinone-type-structure in the bicyclic nucleus of aristolochene with the C8-oxo group and the C-3 hydroxyl group, and the P450 monooxygenase ORF6 that introduces the epoxide at the double bond between carbons 1 and 2. No monoxy or dioxy-intermediates have been reported to be released to the broth, so these three early oxidative reactions may be coupled together. Eremofortin B is further oxidized by another P450 monooxygenase, that introduces a second epoxide between carbons 7 and 11 prior to acetylation to eremofortin A by the acetyltransferase ORF8. The second epoxidation may be performed by a second P450 monooxygenase. After the acetylation step, eremofortin A is converted to eremofortin C and then to PR-toxin. First the conversion of eremofortin A to eremofortin C proceeds by oxidation of the side chain of the molecule at C-12 and is catalyzed by the short-chain oxidoreductase prx1. The cytochrome P450 monooxygenase ORF6 is probably also involved in this step. The primary alcohol formed at C-12 is finally oxidized by the short-chain alcohol dehydrogenase prx4 that forms PR-toxin. This chain is PR-toxin biosynthesis cluster protein 7, found in Penicillium roqueforti (strain FM164).